Reading from the N-terminus, the 790-residue chain is Nitrogen permease reactivator protein (790 aa).

The disordered stretch occupies residues 1 to 68 (MSSLTRLLQE…DRNRANVPVP (68 aa)). The segment covering 16–38 (TSNSSPRTSADTLTTTPESQSLD) has biased composition (polar residues). A compositionally biased stretch (low complexity) spans 46-58 (SSHIGSVSNSSSS). The residue at position 47 (S47) is a Phosphoserine; by autocatalysis. Residues S85, S90, S100, S111, S116, S125, S137, and S141 each carry the phosphoserine modification. A compositionally biased stretch (polar residues) spans 151–175 (RLSTTSHTSGRAIPSLSSSIPYSVP). Disordered regions lie at residues 151-188 (RLSTTSHTSGRAIPSLSSSIPYSVPNSNKDNNSSNSNS) and 234-258 (LQKASMDSNNANATQSRSISRSGSF). Residues 176 to 188 (NSNKDNNSSNSNS) show a composition bias toward low complexity. The span at 238–248 (SMDSNNANATQ) shows a compositional bias: polar residues. Over residues 249–258 (SRSISRSGSF) the composition is skewed to low complexity. The residue at position 257 (S257) is a Phosphoserine; by autocatalysis. S259, S260, S288, S292, S317, S320, and S328 each carry phosphoserine. Positions 276-289 (NSNSAGMSFSANSN) are enriched in low complexity. The tract at residues 276 to 357 (NSNSAGMSFS…QSVPRSQHSS (82 aa)) is disordered. Composition is skewed to polar residues over residues 290 to 305 (GPSPNIKNPNVTNGST), 314 to 339 (RQSSIYSASRQPTGSYTDNFYGSPSS), and 346 to 357 (PSQSVPRSQHSS). Y334 is modified (phosphotyrosine). A phosphoserine mark is found at S336, S353, and S356. Phosphoserine; by autocatalysis is present on S357. A Phosphoserine modification is found at S385. The region spanning 438–742 (IKTGADLGAG…IEEIMEDPWI (305 aa)) is the Protein kinase domain. Residues 444–452 (LGAGAGGSV) and K467 each bind ATP. D561 acts as the Proton acceptor in catalysis. Disordered stretches follow at residues 666-704 (LVTRTPDPPSYDESHSTEKKKPESSSNNVSDPNNVNIGP) and 766-790 (HHTQVDQSEAHIAGLEKKKKKQNNQ). Positions 677–688 (DESHSTEKKKPE) are enriched in basic and acidic residues. Low complexity predominate over residues 689 to 701 (SSSNNVSDPNNVN).

The protein belongs to the protein kinase superfamily. Ser/Thr protein kinase family. Interacts with TIP41. Post-translationally, hyperphosphorylated in nitrogen-rich growth medium. Nitrogen limitation (or rapamycin treatment) leads to substantial, though not complete dephosphorylation. Autophosphorylation plays only a minor role and seems not to be regulated by the quality of the nitrogen source.

It localises to the cytoplasm. The enzyme catalyses L-seryl-[protein] + ATP = O-phospho-L-seryl-[protein] + ADP + H(+). It catalyses the reaction L-threonyl-[protein] + ATP = O-phospho-L-threonyl-[protein] + ADP + H(+). Dephosphorylation by SIT4 activates NPR1 kinase activity. Nutrient-regulated protein kinase that promotes the activity of at least 6 distinct transport systems for nitrogenous nutrients under conditions of nitrogen catabolite derepression. Under poor nitrogen growth conditions, required for post-Golgi sorting of the general amino acid permease GAP1 and the three known ammonia permeases, MEP1/2/3, to the plasma membrane. Also contributes to the stability and the retention of GAP1 at the plasma membrane. Inversely, promotes the degradation of tryptophan permease TAT2 under the same conditions. Activity is regulated by the TOR signaling pathway via phosphatase SIT4. Although thought to be involved in regulation of GLN3-dependent transcription by nitrogen catabolite repression, this seems to be an indirect effect from the reduced uptake of the nitrogen-repressing compound. This Saccharomyces cerevisiae (strain ATCC 204508 / S288c) (Baker's yeast) protein is Nitrogen permease reactivator protein (NPR1).